Here is a 129-residue protein sequence, read N- to C-terminus: Glycine cleavage system H protein (129 aa).

The Lipoyl-binding domain maps to 23–104; that stretch reads TVTVGITQHA…SYSAWLFKLK (82 aa). At Lys-64 the chain carries N6-lipoyllysine.

Belongs to the GcvH family. In terms of assembly, the glycine cleavage system is composed of four proteins: P, T, L and H. It depends on (R)-lipoate as a cofactor.

In terms of biological role, the glycine cleavage system catalyzes the degradation of glycine. The H protein shuttles the methylamine group of glycine from the P protein to the T protein. The sequence is that of Glycine cleavage system H protein from Nitrosomonas eutropha (strain DSM 101675 / C91 / Nm57).